The chain runs to 401 residues: Sorting nexin-4 (401 aa).

The PX domain occupies 17-139; it reads FLQCLVTEPR…AFLENPNWNN (123 aa). A 1,2-diacyl-sn-glycero-3-phospho-(1D-myo-inositol-3-phosphate)-binding residues include Arg-60, Ser-62, Lys-86, and Arg-105. Ser-62 carries the post-translational modification Phosphoserine. A coiled-coil region spans residues 190 to 292; that stretch reads ISNLEGSIQK…DVEALQEYSA (103 aa).

The protein belongs to the sorting nexin family.

The protein resides in the cytoplasm. The protein localises to the cytosol. Its subcellular location is the preautophagosomal structure membrane. It is found in the endosome membrane. Sorting nexin, involved in the separation or division of vacuoles throughout the entire life cycle of the cells. Involved in retrieval of late-Golgi SNAREs from post-Golgi endosomes to the trans-Golgi network, for cytoplasm to vacuole transport (Cvt), and autophagy of large cargos including mitophagy, pexophagy and glycophagy. In Schizosaccharomyces pombe (strain 972 / ATCC 24843) (Fission yeast), this protein is Sorting nexin-4 (snx4).